We begin with the raw amino-acid sequence, 261 residues long: Thioesterase AMT4 (261 aa).

This sequence belongs to the AMT4 thioesterase family.

It participates in mycotoxin biosynthesis. Functionally, thioesterase; part of the gene clusters that mediate the biosynthesis of AM-toxins, host-selective toxins (HSTs) causing Alternaria blotch on apple, a worldwide distributed disease. AM-toxins are cyclic depsipeptides containing the 3 residues 2-hydroxy-isovaleric acid (2-HIV), dehydroalanine, L-alanine which are common for all 3 AM-toxins I to III. The fourth precursor is L-alpha-amino-methoxyphenyl-valeric acid (L-Amv) for AM-toxin I, L-alpha-amino-phenyl-valeric acid (L-Apv) for AM-toxin II, and L-alpha-amino-hydroxyphenyl-valeric acid (L-Ahv) for AM-toxin III. AM-toxins have two target sites for affecting susceptible apple cells; they cause invagination of the plasma membrane and electrolyte loss and chloroplast disorganization. The non-ribosomal peptide synthetase AMT1 contains 4 catalytic modules and is responsible for activation of each residue in AM-toxin. The aldo-keto reductase AMT2 catalyzes the conversion of 2-keto-isovaleric acid (2-KIV) to 2-hydroxy-isovaleric acid (2-HIV), one of the precursor residues incorporated by AMT1 during AM-toxin biosynthesis, by reduction of its ketone to an alcohol. The cytochrome P450 monooxygenase AMT3 and the thioesterase AMT4 are also important for AM-toxin production, but their exact function within the AM-toxin biosynthesis are not known yet. Up to 21 proteins (including AMT1 to AMT4) are predicted to be involved in AM-toxin biosynthesis since their expression ishighly up-regulated in AM-toxin-producing cultures. This is Thioesterase AMT4 from Alternaria alternata (Alternaria rot fungus).